We begin with the raw amino-acid sequence, 440 residues long: MKRQLNLRFNRKDIRWYLLRLFSNLQFSIILLLLIAIFSTIGTVIEQNKESSFYQTQYTLSNEYYNILNWKNIELFGFNHVYTTWWFLSLLFIFSLSLFTCSISRQIPSLQNARRWHFYKNPNQFKKFTGSQEIKTTQLNLLASCLQNYNYHIFQQGKSIYGYKGLLGRLAPIFVHGSIILLLTGSVLGLVSGFSAQEMVPSGELFRLQNIISSGKFSYIPQEFSARVNDFNIEYNPNKSISQFFSDISILNSEGKELKRSTIYVNKPLEFHGLTIYQTDWDIIAIRVRINNGNILQIPLKSVLLPNNNKIWIGVLFQEKESQLSVVLSDLQGQATIYNKNGKNILSINIGEKYIINNSTITFLNTIASTGLQIKNDPGIPIVYASFFFLITSISVSYISYSQIWIVEKNRHFYIGGVTNRAQLMFEEELLKISKMSSSI.

Helical transmembrane passes span 25–45, 84–104, and 170–190; these read LQFSIILLLLIAIFSTIGTVI, TWWFLSLLFIFSLSLFTCSIS, and LAPIFVHGSIILLLTGSVLGL.

Belongs to the Ccs1/CcsB family. In terms of assembly, may interact with CcsA.

The protein resides in the plastid. It is found in the chloroplast thylakoid membrane. Required during biogenesis of c-type cytochromes (cytochrome c6 and cytochrome f) at the step of heme attachment. This Pyropia yezoensis (Susabi-nori) protein is Cytochrome c biogenesis protein Ccs1.